We begin with the raw amino-acid sequence, 959 residues long: Glycine dehydrogenase (decarboxylating) (959 aa).

Lys704 bears the N6-(pyridoxal phosphate)lysine mark.

The protein belongs to the GcvP family. The glycine cleavage system is composed of four proteins: P, T, L and H. Requires pyridoxal 5'-phosphate as cofactor.

It carries out the reaction N(6)-[(R)-lipoyl]-L-lysyl-[glycine-cleavage complex H protein] + glycine + H(+) = N(6)-[(R)-S(8)-aminomethyldihydrolipoyl]-L-lysyl-[glycine-cleavage complex H protein] + CO2. Functionally, the glycine cleavage system catalyzes the degradation of glycine. The P protein binds the alpha-amino group of glycine through its pyridoxal phosphate cofactor; CO(2) is released and the remaining methylamine moiety is then transferred to the lipoamide cofactor of the H protein. In Parasynechococcus marenigrum (strain WH8102), this protein is Glycine dehydrogenase (decarboxylating).